A 542-amino-acid chain; its full sequence is Sensor protein CitS (542 aa).

Over 1–13 (MVKKRFHFSLQTK) the chain is Cytoplasmic. Residues 14 to 34 (IMGLIAALLVFVIGVLTITLA) form a helical membrane-spanning segment. Topologically, residues 35 to 175 (VQHTQGERRQ…TEQSIKKHLR (141 aa)) are extracellular. A helical membrane pass occupies residues 176–196 (NLSVIAVLVLLLGFIGAAVLA). Residues 197 to 542 (KSIRKDTLGL…PFDSHRDCGG (346 aa)) are Cytoplasmic-facing. In terms of domain architecture, PAS spans 216 to 279 (RERNAMLFAI…MSVLEKGEML (64 aa)). The Histidine kinase domain occupies 336–528 (AQTHEFSNKL…VFTVFIPKEK (193 aa)). A Phosphohistidine; by autocatalysis modification is found at His-339.

The protein resides in the cell membrane. It catalyses the reaction ATP + protein L-histidine = ADP + protein N-phospho-L-histidine.. Its function is as follows. Member of the two-component regulatory system CitT/CitS. Regulates the expression of the citM-yflN operon. Functions probably as a membrane-associated protein kinase that phosphorylates CitT in response to environmental citrate or Mg(2+)-citrate complex. The chain is Sensor protein CitS (citS) from Bacillus subtilis (strain 168).